A 298-amino-acid chain; its full sequence is Protein ILRUN (298 aa).

Residues 199-277 (NTQPHRKVEG…SVNLSPSSHA (79 aa)) are disordered. Serine 215 and serine 222 each carry phosphoserine. Positions 242–255 (TWAPAPDTWAPAPD) are enriched in low complexity. Positions 262-277 (NRLSQNSVNLSPSSHA) are enriched in polar residues. Phosphoserine is present on serine 272.

In terms of assembly, interacts with IRF3; the interaction inhibits IRF3 binding to its DNA consensus sequence. As to expression, expressed in lung (at protein level).

The protein localises to the cytoplasm. It localises to the nucleus. In terms of biological role, negative regulator of innate antiviral response. Blocks IRF3-dependent cytokine production such as IFNA, IFNB and TNF. Interacts with IRF3 and inhibits IRF3 recruitment to type I IFN promoter sequences while also reducing nuclear levels of the coactivators EP300 and CREBBP. The polypeptide is Protein ILRUN (Homo sapiens (Human)).